The primary structure comprises 418 residues: Metacaspase-2 (418 aa).

The disordered stretch occupies residues 68 to 113; the sequence is PSPYTHAPHAPSPFNHAPPDSYPFTHAPPASSPFNHAPPGPPPPVH. The span at 70–80 shows a compositional bias: low complexity; sequence PYTHAPHAPSP. Pro residues predominate over residues 103–112; the sequence is HAPPGPPPPV. Catalysis depends on residues histidine 200 and cysteine 256. The interval 385–406 is disordered; the sequence is PDEEEEVNQAPQKTQEPQLSAN. A compositionally biased stretch (polar residues) spans 393-405; that stretch reads QAPQKTQEPQLSA.

This sequence belongs to the peptidase C14B family.

In terms of biological role, acts as a negative regulator of oxidative stress cell death and hypersensitive cell death response mediated by immune response. Acts via indirect or direct regulation of AMC1 at postranscriptional level. This Arabidopsis thaliana (Mouse-ear cress) protein is Metacaspase-2 (AMC2).